We begin with the raw amino-acid sequence, 481 residues long: Cysteine protease atg-4.1 (481 aa).

Cys-112 (nucleophile) is an active-site residue. Catalysis depends on residues Asp-313 and His-315. Residues 462-481 (DVHTEEEDADEDNDDDVANA) form a disordered region.

It belongs to the peptidase C54 family.

It is found in the cytoplasm. The enzyme catalyses [protein]-C-terminal L-amino acid-glycyl-phosphatidylethanolamide + H2O = [protein]-C-terminal L-amino acid-glycine + a 1,2-diacyl-sn-glycero-3-phosphoethanolamine. Cysteine protease required for autophagy. Cleaves the C-terminal amino acid of ATG8 family proteins lgg-1, to reveal a C-terminal glycine. Exposure of the glycine at the C-terminus is essential for ATG8 proteins conjugation to phosphatidylethanolamine (PE) and insertion to membranes, which is necessary for autophagy. Its cleavage activity is functionally redundant to atg-4.2, but it cleaves lgg-1 precursors more efficiently than atg-4.2. Acts redundantly with atg-4.2 to promote the lgg-1 delipidation to release the protein from membranes, which facilitates multiple events during macroautophagy. Unlike atg-4.2 does not seem to be required for autophagosome maturation. The sequence is that of Cysteine protease atg-4.1 from Caenorhabditis elegans.